A 500-amino-acid chain; its full sequence is Zinc finger protein ENHYDROUS (500 aa).

Residues 1–42 (MPVDLDNSSTVSGDASVSSTGNQNLTPKSVGKKKRNLPGMPD) are disordered. Residues 8 to 21 (SSTVSGDASVSSTG) show a composition bias toward low complexity. The residue at position 51 (Ser51) is a Phosphoserine. 2 C2H2-type zinc fingers span residues 61 to 83 (FVCEICNKGFQRDQNLQLHRRGH) and 102 to 132 (YVCPVSGCVHHDPSRALGDLTGIKKHFCRKH). A Nuclear localization signal motif is present at residues 124–131 (IKKHFCRK). Residues 137–160 (WKCEKCSKKYAVQSDWKAHSKICG) form a C2H2-type 2; degenerate zinc finger. Cys139, Cys142, His155, Cys159, Cys166, Cys168, His181, and Cys185 together coordinate Zn(2+). The segment at 164 to 187 (YKCDCGTLFSRRDSFITHRAFCDA) adopts a CCHC-type 2; atypical zinc-finger fold. Residues 174–186 (RRDSFITHRAFCD) form an SHR-binding region. The tract at residues 196–236 (HTQSKKLYPETVTRKNPEIEQKSPAAVESSPSLPPSSPPSV) is disordered. Basic and acidic residues predominate over residues 207-216 (VTRKNPEIEQ).

As to quaternary structure, interacts with the DELLA proteins (e.g. GAI/RGA2, RGA, RGL1, RGL2 and RGLG3), acting as coactivators. As to expression, at 3 days post anthesis (DPA), expressed in the chalazal endosperm region. By 6 DPA, expressed in the endosperm and embryo. In fully germinated seed, strongest expression in the root tip and not detected in the cotyledons. In 4-days old seedlings, restricted to the vasculature of the cotyledons, the shoot apical meristem region, and the root tip. By 8 days, restricted to newly emerged leaves.

Its subcellular location is the nucleus. Its function is as follows. Transcription factor promoting the transition to germination by regulating light and hormonal signaling during seed maturation. Acts as a positive regulator of phytochrome and/or gibberellin action. This is Zinc finger protein ENHYDROUS from Arabidopsis thaliana (Mouse-ear cress).